The primary structure comprises 202 residues: NADH-quinone oxidoreductase subunit C (202 aa).

It belongs to the complex I 30 kDa subunit family. NDH-1 is composed of 14 different subunits. Subunits NuoB, C, D, E, F, and G constitute the peripheral sector of the complex.

The protein resides in the cell inner membrane. It carries out the reaction a quinone + NADH + 5 H(+)(in) = a quinol + NAD(+) + 4 H(+)(out). Its function is as follows. NDH-1 shuttles electrons from NADH, via FMN and iron-sulfur (Fe-S) centers, to quinones in the respiratory chain. The immediate electron acceptor for the enzyme in this species is believed to be ubiquinone. Couples the redox reaction to proton translocation (for every two electrons transferred, four hydrogen ions are translocated across the cytoplasmic membrane), and thus conserves the redox energy in a proton gradient. This chain is NADH-quinone oxidoreductase subunit C, found in Brucella canis (strain ATCC 23365 / NCTC 10854 / RM-666).